Reading from the N-terminus, the 865-residue chain is MGSIDTVGMGQRAIDQIISELSLNEKVALLSGVDAWHTFAIPRLGIPSIRTTDGPNGARGTRYFNGVPSACLPCGTALGATFDRDLIFSLGQLLAAECRAKGAHVLLGPTINIQRGPLGGRGFESFSEDPVLSGLAAASYCSGVQDGGVVPTLKHLVCNDQEHERVAVSALVTPRALREIYLLPFQLAIQGARPGAVMTSYNKVNGLHASENPGLIRDILRGEWGYEGAVISDWFGTYSVADAVNAGLDLEMPGPTRFRGPALMHALTSNKVSEKTLNERVRKVLELVQLASRAGVPEYAPERKLNRPEDRALLRRAAGESVVLLKNDKNDSTNSPILPLDREKTTLVIGPNADLAAYCGGGSASLLAYYTVTPRQGIADKCGAEQVVFSQGCYGHKELPLLGEHLRTIETGQPGYTFRVYTEPPPASGSFKGSDSRTPVDELHMTNSSAFLMDYSHPQISGDTYYATLEGTFEPPESGVYEFGLTVAGTGLLYIDGVLVVDNKTVQRAGTSFFGIGTVEERGERYLEAGKKHHVFVEFGTAPTSNLQHHHGVVSFGPGGLRLGGCRKLDTDTAIQQAVQSAAQADQVVVCVGLSGDWESEGFDRPHMDLPPGTEELVNAVLAVQPNAVIVVQSGTPVTMPWADKAKALLQAWYGGNEAGNGIADVLFGDVNPSAKLPLTFPRELSQNPSYLSYRSERGRVLYSEDIYVGYRYYDTTGQPPLFRFGHGLSYSTFHLRDLTVRETAPYAANIKESSLRVSVTVSNTSARPGAEVVLVYVRPPAAACSVGRPVRELKGYEKVMLQPGETREVSITIPLGLATSFWDEGCDAWLSEKGLYFVEAVGTGEGNTLVAPLTVQVSRVWNGL.

The active site involves Asp233. 4 N-linked (GlcNAc...) asparagine glycosylation sites follow: Asn330, Asn447, Asn503, and Asn764. The PA14 domain occupies 411 to 579 (TGQPGYTFRV…DTDTAIQQAV (169 aa)).

It belongs to the glycosyl hydrolase 3 family.

It localises to the secreted. The catalysed reaction is Hydrolysis of terminal, non-reducing beta-D-glucosyl residues with release of beta-D-glucose.. The protein operates within glycan metabolism; cellulose degradation. Beta-glucosidases are one of a number of cellulolytic enzymes involved in the degradation of cellulosic biomass. Catalyzes the last step releasing glucose from the inhibitory cellobiose. The sequence is that of Probable beta-glucosidase J (bglJ) from Aspergillus fumigatus (strain CBS 144.89 / FGSC A1163 / CEA10) (Neosartorya fumigata).